A 278-amino-acid chain; its full sequence is Tumor necrosis factor ligand superfamily member 6 (278 aa).

Over 1–77 (MQQPVNYPCP…SPLKKKDNIE (77 aa)) the chain is Cytoplasmic. A disordered region spans residues 26–68 (PGSVFSCPSSGPRGPGQRRPPPPPPPPSPLPPPSQPPPLPPLS). Over residues 33–42 (PSSGPRGPGQ) the composition is skewed to low complexity. Over residues 43–68 (RRPPPPPPPPSPLPPPSQPPPLPPLS) the composition is skewed to pro residues. The chain crosses the membrane as a helical; Signal-anchor for type II membrane protein span at residues 78-99 (LWLPVIFFMVLVALVGMGLGMY). At 100–278 (QLFHLQKELA…SKTFFGLYKL (179 aa)) the chain is on the extracellular side. Residue Asn-116 is glycosylated (N-linked (GlcNAc...) asparagine). The span at 125–135 (EKQIANPSTPS) shows a compositional bias: polar residues. Residues 125–147 (EKQIANPSTPSETKKPRSVAHLT) are disordered. The THD domain occupies 142–278 (SVAHLTGNPR…SKTFFGLYKL (137 aa)). Cys-199 and Cys-230 form a disulfide bridge. 2 N-linked (GlcNAc...) asparagine glycosylation sites follow: Asn-247 and Asn-257.

The protein belongs to the tumor necrosis factor family. Homotrimer. Interacts with ARHGAP9, BAIAP2L1, BTK, CACNB3, CACNB4, CRK, DLG2, DNMBP, DOCK4, EPS8L3, FGR, FYB1, FYN, HCK, ITK, ITSN2, KALRN, LYN, MACC1, MIA, MPP4, MYO15A, NCF1, NCK1, NCK2, NCKIPSD, OSTF1, PIK3R1, PSTPIP1, RIMBP3C, SAMSN1, SH3GL3, SH3PXD2B, SH3PXD2A, SH3RF2, SKAP2, SNX33, SNX9, SORBS3, SPTA1, SRC, SRGAP1, SRGAP2, SRGAP3, TEC, TJP3 and YES1. Post-translationally, the soluble form derives from the membrane form by proteolytic processing. The membrane-bound form undergoes two successive intramembrane proteolytic cleavages. The first one is processed by ADAM10 producing an N-terminal fragment, which lacks the receptor-binding extracellular domain. This ADAM10-processed FasL (FasL APL) remnant form is still membrane anchored and further processed by SPPL2A that liberates the FasL intracellular domain (FasL ICD). FasL shedding by ADAM10 is a prerequisite for subsequent intramembrane cleavage by SPPL2A in T-cells. Phosphorylated by FGR on tyrosine residues; this is required for ubiquitination and subsequent internalization. In terms of processing, N-glycosylated. Post-translationally, monoubiquitinated. Expressed in activated splenocytes and thymocytes. Moderate or weak expression found in small intestines, kidney and lung.

It localises to the cell membrane. The protein localises to the cytoplasmic vesicle lumen. It is found in the lysosome lumen. The protein resides in the secreted. Its subcellular location is the nucleus. Functionally, cytokine that binds to TNFRSF6/FAS, a receptor that transduces the apoptotic signal into cells. Involved in cytotoxic T-cell-mediated apoptosis, natural killer cell-mediated apoptosis and in T-cell development. Initiates fratricidal/suicidal activation-induced cell death (AICD) in antigen-activated T-cells contributing to the termination of immune responses. TNFRSF6/FAS-mediated apoptosis also has a role in the induction of peripheral tolerance. Binds to TNFRSF6B/DcR3, a decoy receptor that blocks apoptosis. Induces FAS-mediated activation of NF-kappa-B, initiating non-apoptotic signaling pathways. Can induce apoptosis but does not appear to be essential for this process. Its function is as follows. Cytoplasmic form induces gene transcription inhibition. In Rattus norvegicus (Rat), this protein is Tumor necrosis factor ligand superfamily member 6 (Faslg).